The primary structure comprises 391 residues: ATP phosphoribosyltransferase regulatory subunit (391 aa).

It belongs to the class-II aminoacyl-tRNA synthetase family. HisZ subfamily. In terms of assembly, heteromultimer composed of HisG and HisZ subunits.

The protein resides in the cytoplasm. The protein operates within amino-acid biosynthesis; L-histidine biosynthesis; L-histidine from 5-phospho-alpha-D-ribose 1-diphosphate: step 1/9. Functionally, required for the first step of histidine biosynthesis. May allow the feedback regulation of ATP phosphoribosyltransferase activity by histidine. The sequence is that of ATP phosphoribosyltransferase regulatory subunit from Bacillus pumilus (strain SAFR-032).